The primary structure comprises 264 residues: 3-methyl-2-oxobutanoate hydroxymethyltransferase (264 aa).

The Mg(2+) site is built by D44 and D83. Residues 44 to 45 (DS), D83, and K112 each bind 3-methyl-2-oxobutanoate. Mg(2+) is bound at residue E114. Catalysis depends on E181, which acts as the Proton acceptor.

This sequence belongs to the PanB family. Homodecamer; pentamer of dimers. Mg(2+) is required as a cofactor.

The protein localises to the cytoplasm. The catalysed reaction is 3-methyl-2-oxobutanoate + (6R)-5,10-methylene-5,6,7,8-tetrahydrofolate + H2O = 2-dehydropantoate + (6S)-5,6,7,8-tetrahydrofolate. Its pathway is cofactor biosynthesis; coenzyme A biosynthesis. Catalyzes the reversible reaction in which hydroxymethyl group from 5,10-methylenetetrahydrofolate is transferred onto alpha-ketoisovalerate to form ketopantoate. This Pyrobaculum arsenaticum (strain DSM 13514 / JCM 11321 / PZ6) protein is 3-methyl-2-oxobutanoate hydroxymethyltransferase.